Reading from the N-terminus, the 237-residue chain is DNA replication inhibitor toxin SocB (237 aa).

As to quaternary structure, interacts with cognate antitoxin SocA and with beta sliding clamp (dnaN). Post-translationally, degraded by ClpXP, recognition of SocB by ClpX requires SocA.

The protein localises to the cytoplasm. Toxic component of an atypical type II toxin-antitoxin (TA) system. Upon overexpression in the absence of its cognate antitoxin SocA, leads to inhibition of colony formation, cellular filamentation, incomplete DNA replication and induction of the SOS response. Exercises toxicity by binding the beta sliding clamp (dnaN), blocking DNA replication and leading to premature replication fork collapse and incomplete cell division. Unlike most type II TA systems, the SocB toxin is unstable and targeted by its cognate antitoxin SocA for degradation by ClpXP. Not toxic upon expression in E.coli. The sequence is that of DNA replication inhibitor toxin SocB from Caulobacter vibrioides (strain NA1000 / CB15N) (Caulobacter crescentus).